Here is a 178-residue protein sequence, read N- to C-terminus: Glutamyl-tRNA(Gln) amidotransferase subunit C, mitochondrial (178 aa).

A mitochondrion-targeting transit peptide spans 1 to 31; that stretch reads MFRHIFTLGPRSISAITVRSRRALSSTAKPV. A disordered region spans residues 26 to 67; sequence STAKPVSAPVTSDDRPNLDVKHLKHPTKVPQQPHKSDIDRRQ. The segment covering 37-46 has biased composition (basic and acidic residues); that stretch reads SDDRPNLDVK.

It belongs to the GatC family. As to quaternary structure, subunit of the heterotrimeric GatCAB amidotransferase (AdT) complex, composed of A, B and C subunits.

The protein localises to the mitochondrion. It catalyses the reaction L-glutamyl-tRNA(Gln) + L-glutamine + ATP + H2O = L-glutaminyl-tRNA(Gln) + L-glutamate + ADP + phosphate + H(+). Its function is as follows. Allows the formation of correctly charged Gln-tRNA(Gln) through the transamidation of misacylated Glu-tRNA(Gln) in the mitochondria. The reaction takes place in the presence of glutamine and ATP through an activated gamma-phospho-Glu-tRNA(Gln). This Aedes aegypti (Yellowfever mosquito) protein is Glutamyl-tRNA(Gln) amidotransferase subunit C, mitochondrial.